The primary structure comprises 148 residues: UPF0178 protein lpl0088 (148 aa).

This sequence belongs to the UPF0178 family.

This Legionella pneumophila (strain Lens) protein is UPF0178 protein lpl0088.